Consider the following 480-residue polypeptide: Wax ester synthase/diacylglycerol acyltransferase 7 (480 aa).

The Cytoplasmic portion of the chain corresponds to 1-193 (MTYGEEEPVS…LRSIFTIGST (193 aa)). Residue His-135 is the Proton acceptor of the active site. The chain crosses the membrane as a helical span at residues 194–214 (MRLLWNTTIDMLLLLATVLFL). The Lumenal portion of the chain corresponds to 215 to 329 (KDTKTPLKAG…VKDSKCRWGN (115 aa)). The N-linked (GlcNAc...) asparagine glycan is linked to Asn-252. A helical membrane pass occupies residues 330-350 (YFSFIFLPFTIGLQTDPLVYL). The Cytoplasmic segment spans residues 351 to 365 (KMSKSMMARKKHSYH). The chain crosses the membrane as a helical span at residues 366–386 (AALVYFIIKIVLKVFGAKAAA). Topologically, residues 387 to 480 (ELFDRPVRNT…KASLCERGLL (94 aa)) are lumenal. Asn-395 carries an N-linked (GlcNAc...) asparagine glycan.

The protein in the N-terminal section; belongs to the long-chain O-acyltransferase family. As to expression, expressed in roots, stems, leaves, flowers and siliques.

It is found in the cell membrane. It localises to the endoplasmic reticulum membrane. The protein localises to the golgi apparatus membrane. It carries out the reaction an acyl-CoA + a 1,2-diacyl-sn-glycerol = a triacyl-sn-glycerol + CoA. The catalysed reaction is a long chain fatty alcohol + a fatty acyl-CoA = a wax ester + CoA. The protein operates within glycerolipid metabolism; triacylglycerol biosynthesis. Its pathway is lipid metabolism. Bifunctional wax ester synthase/diacylglycerol acyltransferase that uses acyl-CoAs with 14, 16 and 18 carbons as substrates, preferably in combination with 16:0ol alcohol. Involved in cuticular wax biosynthesis. This Arabidopsis thaliana (Mouse-ear cress) protein is Wax ester synthase/diacylglycerol acyltransferase 7.